The following is a 425-amino-acid chain: UDP-N-acetyl-D-glucosamine 6-dehydrogenase (425 aa).

Residues V17, D35, R40, T86, and T121 each coordinate NAD(+). The active-site Nucleophile is C261. R332 is an NAD(+) binding site.

Belongs to the UDP-glucose/GDP-mannose dehydrogenase family. Homotrimer.

It carries out the reaction UDP-N-acetyl-alpha-D-glucosamine + 2 NAD(+) + H2O = UDP-2-acetamido-2-deoxy-alpha-D-glucuronate + 2 NADH + 3 H(+). The protein operates within capsule biogenesis; capsule polysaccharide biosynthesis. Its pathway is glycan metabolism; Vi-antigen biosynthesis. Dehydrogenase required for the biosynthesis of the capsular polysaccharide, commonly referred as the Vi antigen, an important virulence factor. Catalyzes the conversion of UDP-N-acetylglucosamine (UDP-GlcNAc) to UDP-N-acetylglucosaminuronic acid (UDP-GlcNAcA). Cannot use UDP-GalNAc, UDP-Glc and UDP-Gal as substrates. In Salmonella typhi, this protein is UDP-N-acetyl-D-glucosamine 6-dehydrogenase.